Here is a 265-residue protein sequence, read N- to C-terminus: 5'-nucleotidase SurE (265 aa).

The a divalent metal cation site is built by aspartate 8, aspartate 9, serine 40, and asparagine 98.

The protein belongs to the SurE nucleotidase family. The cofactor is a divalent metal cation.

The protein resides in the cytoplasm. It carries out the reaction a ribonucleoside 5'-phosphate + H2O = a ribonucleoside + phosphate. Nucleotidase that shows phosphatase activity on nucleoside 5'-monophosphates. In Nostoc sp. (strain PCC 7120 / SAG 25.82 / UTEX 2576), this protein is 5'-nucleotidase SurE.